The primary structure comprises 1050 residues: DNA-directed RNA polymerase subunit beta (1050 aa).

The protein belongs to the RNA polymerase beta chain family. As to quaternary structure, in plastids the minimal PEP RNA polymerase catalytic core is composed of four subunits: alpha, beta, beta', and beta''. When a (nuclear-encoded) sigma factor is associated with the core the holoenzyme is formed, which can initiate transcription (Potential).

It is found in the plastid. Its subcellular location is the apicoplast. The catalysed reaction is RNA(n) + a ribonucleoside 5'-triphosphate = RNA(n+1) + diphosphate. In terms of biological role, DNA-dependent RNA polymerase catalyzes the transcription of DNA into RNA using the four ribonucleoside triphosphates as substrates. The polypeptide is DNA-directed RNA polymerase subunit beta (rpoB) (Neospora caninum (Coccidian parasite)).